The sequence spans 573 residues: Probable D-xylulose kinase A (573 aa).

Positions 97, 168, 284, and 285 each coordinate substrate. Residues W366, G471–G472, and N475 each bind ATP.

It belongs to the FGGY kinase family.

It is found in the cytoplasm. The enzyme catalyses D-xylulose + ATP = D-xylulose 5-phosphate + ADP + H(+). Highly specific D-xylulose kinase which participates in the catabolism of xylose. Xylose is a major component of hemicelluloses such as xylan. Most fungi utilize D-xylose via three enzymatic reactions, xylose reductase (XR), xylitol dehydrogenase (XDH), and xylulokinase, to form xylulose 5-phosphate, which enters pentose phosphate pathway. This is Probable D-xylulose kinase A (xkiA) from Aspergillus fumigatus (strain ATCC MYA-4609 / CBS 101355 / FGSC A1100 / Af293) (Neosartorya fumigata).